The primary structure comprises 643 residues: MKSKGNPNATFITVKINDVFINAYVDTGATICLADPKIKLKWVKMEKPIKISIADKSVQEIWHRAEMVEIWIRNYKFVAATVCQKSSGMDFVIGNNFLRLYQPFIQGLNYIKLRAPLDKDINQPSKMIYIPVTTPSKILQFAILEKLQDILFELHVQENSKTPLELKVSSTLEEVCDENPLDVKNTNTELVKIELINPEKEVNVPNNIPYSLRDINEFSQECADLVRKGIIEESKSPHSAPAFYVENHNEIKRKKRRMVINYKALNKATIGNAHKLPRIDSILTKVKGSNWFSTLDAKSGYWQLRLHPQSKPLTAFSCPPQKHYQWNVLPFGLKQAPGIYQNFMDKNLEGLENFCLAYIDDILVFTNSSREEHLSKLLVVLERCKEKGLILSKKKAIIARQTIDFLGLTLQENGEIKLQPNVLEKLELFPDAIEDRKQLQRFLGCLNYIADKGFLKEIAKETKNLYPKVSITNPWHWSDLDSKLVNQIKKKCKDLSPLYFPKPEDYLIIETDASGDTWAGCLKAAELLFPKGTKNKVVERLCKYTSGIFSSAEQKYTVHEKETLAALKTMRKWKAELLPKEFTLRTDSSYVTGFARHNLKANYNQGRLVRWQLEFLQYPARVEYIKGEKNSLADTLTREWKQQ.

One can recognise a Peptidase A3A domain in the interval 6 to 209 (NPNATFITVK…KEVNVPNNIP (204 aa)). Asp-26 (for protease activity) is an active-site residue. One can recognise a Reverse transcriptase domain in the interval 226 to 410 (VRKGIIEESK…QTIDFLGLTL (185 aa)). 3 residues coordinate Mg(2+): Asp-296, Asp-360, and Asp-361.

It belongs to the caulimoviridae enzymatic polyprotein family.

The enzyme catalyses DNA(n) + a 2'-deoxyribonucleoside 5'-triphosphate = DNA(n+1) + diphosphate. In terms of biological role, encodes for at least two polypeptides: protease (PR) and reverse transcriptase (RT). The protease processes the polyprotein in cis. Reverse transcriptase is multifunctional enzyme that converts the viral RNA genome into dsDNA in viral cytoplasmic capsids. This enzyme displays a DNA polymerase activity that can copy either DNA or RNA templates, and a ribonuclease H (RNase H) activity that cleaves the RNA strand of RNA-DNA heteroduplexes in a partially processive 3'- to 5'-endonucleasic mode. Neo-synthesized pregenomic RNA (pgRNA) are encapsidated, and reverse-transcribed inside the nucleocapsid. Partial (+)DNA is synthesized from the (-)DNA template and generates the relaxed circular DNA (RC-DNA) genome. After budding and infection, the RC-DNA migrates in the nucleus, and is converted into a plasmid-like covalently closed circular DNA (cccDNA). The polypeptide is Enzymatic polyprotein (Cestrum parqui (CmYLCV)).